Reading from the N-terminus, the 372-residue chain is MHNQAPIQRRKSTRIYVGNVPIGDGAPITVQSMTNTRTTDVEATVNQIKALERVGADIVRVSVPTMDAAEAFKLIKQQVNVPLVADIHFDYRIALKVAEYGVDCLRINPGNIGNEERIRMVVDCARDKNIPIRIGVNAGSLEKDLQEKYGEPTPQALLESAMRHVDHLDRLNFDQFKVSVKASDVFLAVESYRLLAKQIDQPLHLGITEAGGARSGAVKSAIGLGLLLSEGIGDTLRVSLAADPVEEIKVGFDILKSLRIRARGINFIACPTCSRQEFDVIGTVNALEQRLEDIITPMDVSIIGCVVNGPGEALVSTLGVTGGNKKSGLYEDGVRKDRLDNDDMIAQLESRIRAKASQLDEARRIDVLQVEK.

Positions 270, 273, 305, and 312 each coordinate [4Fe-4S] cluster.

Belongs to the IspG family. [4Fe-4S] cluster serves as cofactor.

It catalyses the reaction (2E)-4-hydroxy-3-methylbut-2-enyl diphosphate + oxidized [flavodoxin] + H2O + 2 H(+) = 2-C-methyl-D-erythritol 2,4-cyclic diphosphate + reduced [flavodoxin]. The protein operates within isoprenoid biosynthesis; isopentenyl diphosphate biosynthesis via DXP pathway; isopentenyl diphosphate from 1-deoxy-D-xylulose 5-phosphate: step 5/6. Converts 2C-methyl-D-erythritol 2,4-cyclodiphosphate (ME-2,4cPP) into 1-hydroxy-2-methyl-2-(E)-butenyl 4-diphosphate. This is 4-hydroxy-3-methylbut-2-en-1-yl diphosphate synthase (flavodoxin) from Salmonella schwarzengrund (strain CVM19633).